A 274-amino-acid polypeptide reads, in one-letter code: tRNA-cytidine(32) 2-sulfurtransferase (274 aa).

A PP-loop motif motif is present at residues 40–45 (SGGKDS). The [4Fe-4S] cluster site is built by cysteine 115, cysteine 118, and cysteine 206.

Belongs to the TtcA family. In terms of assembly, homodimer. The cofactor is Mg(2+). [4Fe-4S] cluster is required as a cofactor.

The protein resides in the cytoplasm. The enzyme catalyses cytidine(32) in tRNA + S-sulfanyl-L-cysteinyl-[cysteine desulfurase] + AH2 + ATP = 2-thiocytidine(32) in tRNA + L-cysteinyl-[cysteine desulfurase] + A + AMP + diphosphate + H(+). It participates in tRNA modification. Its function is as follows. Catalyzes the ATP-dependent 2-thiolation of cytidine in position 32 of tRNA, to form 2-thiocytidine (s(2)C32). The sulfur atoms are provided by the cysteine/cysteine desulfurase (IscS) system. This is tRNA-cytidine(32) 2-sulfurtransferase from Pseudomonas paraeruginosa (strain DSM 24068 / PA7) (Pseudomonas aeruginosa (strain PA7)).